The following is a 116-amino-acid chain: Large ribosomal subunit protein bL17 (116 aa).

Belongs to the bacterial ribosomal protein bL17 family. Part of the 50S ribosomal subunit. Contacts protein L32.

The polypeptide is Large ribosomal subunit protein bL17 (Gloeobacter violaceus (strain ATCC 29082 / PCC 7421)).